The chain runs to 121 residues: Putative RNase MJ0127 (121 aa).

Residues Arg76 and His81 contribute to the active site. The short motif at 76–83 (RDKLIHHY) is the RX(4)HXY motif element. Residue Tyr83 is modified to O-di-AMP-tyrosine.

Belongs to the HepT RNase toxin family. Homodimer, probably forms a complex with cognate antitoxin MJ0128. In terms of processing, modified by cognate antitoxin MJ0128; probably at least 2 successive AMPylation events occur on Tyr-83.

Probable toxic component of a putative type VII toxin-antitoxin (TA) system, probably an RNase. Probably neutralized by cognate antitoxin MJ0128. Neutralization may be due to AMPylation by MJ0128. The polypeptide is Putative RNase MJ0127 (Methanocaldococcus jannaschii (strain ATCC 43067 / DSM 2661 / JAL-1 / JCM 10045 / NBRC 100440) (Methanococcus jannaschii)).